The following is a 376-amino-acid chain: Penicillin V acylase (376 aa).

A signal peptide spans 1–29 (MIKNNKRIKSTVCALSLVALTLGSAVSLA). Catalysis depends on C30, which acts as the Nucleophile.

This sequence belongs to the peptidase C59 family. Homotetramer. Dimer of dimers.

Its subcellular location is the periplasm. The enzyme catalyses a penicillin + H2O = 6-aminopenicillanate + a carboxylate. Exhibits uncharacteristic kinetic behavior, showing positive cooperativity coupled with substrate inhibition. Penicillin acylase activity is enhanced in the presence of the reducing agent DTT, indicating active sulfhydryl group in the enzyme. Also shows enhanced activity in presence of organic solvents and detergents. Inhibited largely in presence of Ag(+), Hg(2+) and Cd(2+) ions, which have strong affinities for sulfhydryl groups. Activity is also inhibited by bile salts. Functionally, catalyzes the hydrolysis of penicillin V to 6-aminopenicillanate (6-APA). Shows high specificity towards penicillin V. Can use other beta-lactam substrates, including penicillin G, ampicillin, cephalexin, cloxacillin and dicloxacillin, but at a rate less than 10% of that of penicillin V. Does not show any activity with glyco- or tauro-conjugated bile salts. This chain is Penicillin V acylase, found in Pectobacterium atrosepticum (strain SCRI 1043 / ATCC BAA-672) (Erwinia carotovora subsp. atroseptica).